The following is a 537-amino-acid chain: Organic anion transporter 3 (537 aa).

The Cytoplasmic segment spans residues 1-11 (MTFSEILDRVG). Serine 4 is subject to Phosphoserine. The chain crosses the membrane as a helical span at residues 12–32 (SMGPFQYLHVTLLALPILGIA). Topologically, residues 33-123 (NHNLLQIFTA…LVCGSNKLKE (91 aa)) are extracellular. N-linked (GlcNAc...) asparagine glycosylation is present at asparagine 81. Residues 124–144 (MAQSVFMAGILVGGPVFGELS) form a helical membrane-spanning segment. The Cytoplasmic portion of the chain corresponds to 145–150 (DRFGRK). Residues 151 to 171 (PILTWSYLLLAASGSSAAFSP) traverse the membrane as a helical segment. The Extracellular portion of the chain corresponds to 172–176 (SLTVY). A helical membrane pass occupies residues 177-197 (MIFRFLCGCSISGISLSTIIL). At 198–212 (NVEWVPTSTRAISST) the chain is on the cytoplasmic side. Residues 213–233 (TIGYCYTIGQFILPGLAYAVP) form a helical membrane-spanning segment. Over 234 to 236 (QWR) the chain is Extracellular. A helical transmembrane segment spans residues 237-257 (WLQLSVSAAFFIFSLLSWWVP). Residues 258 to 327 (ESIRWLVLSG…FRVSILRRVT (70 aa)) are Cytoplasmic-facing. Residues 328-348 (FCLSLAWFATGFAYYSLAMGV) form a helical membrane-spanning segment. Over 349–354 (EEFGVN) the chain is Extracellular. The helical transmembrane segment at 355–375 (IYILQIIFGGVDIPAKFITIL) threads the bilayer. The Cytoplasmic segment spans residues 376–383 (SISYLGRR). Residues 384–404 (ITQGFLLILAGVAILALIFVS) form a helical membrane-spanning segment. Residues 405–411 (SEMQLLR) are Extracellular-facing. Residues 412–432 (TALAVFGKGCLSGSFSCLFLY) form a helical membrane-spanning segment. Topologically, residues 433–471 (TSELYPTVLRQTGMGISNIWARVGSMIAPLVKITGELQP) are cytoplasmic. Residues 472–492 (FIPNVIFGTMTLLGGSAAFFL) traverse the membrane as a helical segment. Topologically, residues 493–537 (LETLNRPLPETIEDIQDWYQQTKKTKQEPEAEKASQTIPLKTGGP) are extracellular. The disordered stretch occupies residues 513–537 (QTKKTKQEPEAEKASQTIPLKTGGP).

Belongs to the major facilitator (TC 2.A.1) superfamily. Organic cation transporter (TC 2.A.1.19) family. In terms of tissue distribution, expressed mainly in kidney. In kidney, detected in almost all parts of the nephron, including macula densa cells. Expressed (at protein level) throughout the renal cortex. Widely distributed in the brain with no large regional differences. Expressed in the choroid plexus (CP, located in the ventricles of the brain). Expressed in developing bone. Weakly expressed in brain and eye.

Its subcellular location is the basolateral cell membrane. It carries out the reaction estrone 3-sulfate(out) + glutarate(in) = estrone 3-sulfate(in) + glutarate(out). It catalyses the reaction estrone 3-sulfate(in) + 2-oxoglutarate(out) = estrone 3-sulfate(out) + 2-oxoglutarate(in). The catalysed reaction is taurocholate(out) + glutarate(in) = taurocholate(in) + glutarate(out). The enzyme catalyses dehydroepiandrosterone 3-sulfate(out) + glutarate(in) = dehydroepiandrosterone 3-sulfate(in) + glutarate(out). It carries out the reaction glutarate(in) + 2-oxoglutarate(out) = glutarate(out) + 2-oxoglutarate(in). It catalyses the reaction urate(in) + 2-oxoglutarate(out) = urate(out) + 2-oxoglutarate(in). The catalysed reaction is prostaglandin F2alpha(out) + glutarate(in) = prostaglandin F2alpha(in) + glutarate(out). The enzyme catalyses prostaglandin F2alpha(out) + 2-oxoglutarate(in) = prostaglandin F2alpha(in) + 2-oxoglutarate(out). It carries out the reaction (R)-carnitine(out) + 2-oxoglutarate(in) = (R)-carnitine(in) + 2-oxoglutarate(out). It catalyses the reaction glutarate(in) + (R)-carnitine(out) = glutarate(out) + (R)-carnitine(in). The catalysed reaction is prostaglandin E2(out) + 2-oxoglutarate(in) = prostaglandin E2(in) + 2-oxoglutarate(out). The enzyme catalyses prostaglandin E2(out) + glutarate(in) = prostaglandin E2(in) + glutarate(out). It carries out the reaction urate(in) + glutarate(out) = urate(out) + glutarate(in). It catalyses the reaction taurocholate(out) + 2-oxoglutarate(in) = taurocholate(in) + 2-oxoglutarate(out). The catalysed reaction is dehydroepiandrosterone 3-sulfate(out) + 2-oxoglutarate(in) = dehydroepiandrosterone 3-sulfate(in) + 2-oxoglutarate(out). The enzyme catalyses kynurenate(out) + a dicarboxylate(in) = kynurenate(in) + a dicarboxylate(out). It carries out the reaction (indol-3-yl)acetate(out) + a dicarboxylate(in) = (indol-3-yl)acetate(in) + a dicarboxylate(out). It catalyses the reaction indoxyl sulfate(out) + a dicarboxylate(in) = indoxyl sulfate(in) + a dicarboxylate(out). The catalysed reaction is N-benzoylglycine(out) + a dicarboxylate(in) = N-benzoylglycine(in) + a dicarboxylate(out). The enzyme catalyses 3-carboxy-4-methyl-5-propyl-2-furanpropanoate(out) + a dicarboxylate(in) = 3-carboxy-4-methyl-5-propyl-2-furanpropanoate(in) + a dicarboxylate(out). It carries out the reaction (6R)-L-erythro-5,6,7,8-tetrahydrobiopterin(out) + a dicarboxylate(in) = (6R)-L-erythro-5,6,7,8-tetrahydrobiopterin(in) + a dicarboxylate(out). It catalyses the reaction L-erythro-7,8-dihydrobiopterin(out) + a dicarboxylate(in) = L-erythro-7,8-dihydrobiopterin(in) + a dicarboxylate(out). The catalysed reaction is L-sepiapterin(out) + a dicarboxylate(in) = L-sepiapterin(in) + a dicarboxylate(out). Its activity is regulated as follows. Expression inhibited by androgens such as testosterone. Its function is as follows. Functions as an organic anion/dicarboxylate exchanger that couples organic anion uptake indirectly to the sodium gradient. Transports organic anions such as estrone 3-sulfate (E1S) and urate in exchange for dicarboxylates such as glutarate or ketoglutarate (2-oxoglutarate). Plays an important role in the excretion of endogenous and exogenous organic anions, especially from the kidney and the brain. E1S transport is pH- and chloride-dependent and may also involve E1S/cGMP exchange. Responsible for the transport of prostaglandin E2 (PGE2) and prostaglandin F2(alpha) (PGF2(alpha)) in the basolateral side of the renal tubule. Involved in the transport of neuroactive tryptophan metabolites kynurenate and xanthurenate. Functions as a biopterin transporters involved in the uptake and the secretion of coenzymes tetrahydrobiopterin (BH4), dihydrobiopterin (BH2) and sepiapterin to urine, thereby determining baseline levels of blood biopterins. May be involved in the basolateral transport of steviol, a metabolite of the popular sugar substitute stevioside. May participate in the detoxification/ renal excretion of drugs and xenobiotics, such as the histamine H(2)-receptor antagonists fexofenadine and cimetidine, the antibiotic benzylpenicillin (PCG), the anionic herbicide 2,4-dichloro-phenoxyacetate (2,4-D), the diagnostic agent p-aminohippurate (PAH), the antiviral acyclovir (ACV), and the mycotoxin ochratoxin (OTA), by transporting these exogenous organic anions across the cell membrane in exchange for dicarboxylates such as 2-oxoglutarate. May contribute to the release of cortisol in the adrenals. Involved in one of the detoxification systems on the choroid plexus (CP), removes substrates such as E1S or taurocholate (TC), PCG, 2,4-D and PAH, from the cerebrospinal fluid (CSF) to the blood for eventual excretion in urine and bile. Also contributes to the uptake of several other organic compounds such as the prostanoids prostaglandin E(2) and prostaglandin F(2-alpha), L-carnitine, and the therapeutic drugs allopurinol, 6-mercaptopurine (6-MP) and 5-fluorouracil (5-FU). Mediates the transport of PAH, PCG, and the statins pravastatin and pitavastatin, from the cerebrum into the blood circulation across the blood-brain barrier (BBB). Contributes to the renal uptake of potent uremic toxins (indoxyl sulfate (IS), indole acetate (IA), hippurate/N-benzoylglycine (HA) and 3-carboxy-4-methyl-5-propyl-2-furanpropionate (CMPF)), pravastatin, PCG, E1S and dehydroepiandrosterone sulfate (DHEAS), and is partly involved in the renal uptake of temocaprilat (an angiotensin-converting enzyme (ACE) inhibitor). In summary, plays a role in the efflux of drugs and xenobiotics, helping reduce their undesired toxicological effects on the body. This Mus musculus (Mouse) protein is Organic anion transporter 3 (Slc22a8).